Reading from the N-terminus, the 241-residue chain is Octanoyltransferase (241 aa).

Residues 43 to 228 (AETPDEIWLV…CLTANLDGSP (186 aa)) form the BPL/LPL catalytic domain. Residues 83 to 90 (RGGQITYH), 159 to 161 (ALG), and 172 to 174 (GVS) contribute to the substrate site. The active-site Acyl-thioester intermediate is Cys190.

The protein belongs to the LipB family.

Its subcellular location is the cytoplasm. It carries out the reaction octanoyl-[ACP] + L-lysyl-[protein] = N(6)-octanoyl-L-lysyl-[protein] + holo-[ACP] + H(+). It participates in protein modification; protein lipoylation via endogenous pathway; protein N(6)-(lipoyl)lysine from octanoyl-[acyl-carrier-protein]: step 1/2. Its function is as follows. Catalyzes the transfer of endogenously produced octanoic acid from octanoyl-acyl-carrier-protein onto the lipoyl domains of lipoate-dependent enzymes. Lipoyl-ACP can also act as a substrate although octanoyl-ACP is likely to be the physiological substrate. This chain is Octanoyltransferase, found in Paraburkholderia xenovorans (strain LB400).